A 185-amino-acid chain; its full sequence is Ribosome-recycling factor (185 aa).

Residues 138–179 (TLKRQEKNGDITEDEQRSLEKQVQKVTDDATKEIDKLADQKS) show a composition bias toward basic and acidic residues. Positions 138–185 (TLKRQEKNGDITEDEQRSLEKQVQKVTDDATKEIDKLADQKSQEITQG) are disordered.

Belongs to the RRF family.

The protein resides in the cytoplasm. Its function is as follows. Responsible for the release of ribosomes from messenger RNA at the termination of protein biosynthesis. May increase the efficiency of translation by recycling ribosomes from one round of translation to another. The chain is Ribosome-recycling factor from Lactobacillus gasseri (strain ATCC 33323 / DSM 20243 / BCRC 14619 / CIP 102991 / JCM 1131 / KCTC 3163 / NCIMB 11718 / NCTC 13722 / AM63).